We begin with the raw amino-acid sequence, 246 residues long: Mast cell protease-like protein (246 aa).

The signal sequence occupies residues 1-18 (MQALLFLMALLLPSGAGA). Residues 19–20 (EE) constitute a propeptide, activation peptide. The Peptidase S1 domain occupies 21 to 244 (IIGGVESEPH…HVPWINRVIK (224 aa)). Cys-50 and Cys-66 are joined by a disulfide. Active-site charge relay system residues include His-65 and Asp-109. 2 disulfide bridges follow: Cys-143–Cys-208 and Cys-174–Cys-187. Residue Ser-202 is the Charge relay system of the active site.

This sequence belongs to the peptidase S1 family. Granzyme subfamily.

The chain is Mast cell protease-like protein (Mcptl) from Mus musculus (Mouse).